Reading from the N-terminus, the 379-residue chain is Subtilisin Carlsberg (379 aa).

Residues 1–29 form the signal peptide; that stretch reads MMRKKSFWLGMLTAFMLVFTMAFSDSASA. Residues 30 to 105 constitute a propeptide that is removed on maturation; that stretch reads AQPAKNVEKD…VEEDHVAHAL (76 aa). An Inhibitor I9 domain is found at 44-102; the sequence is FKSGVKTASVKKDIIKESGGKVDKQFRIINAAKAKLDKEALKEVKNDPDVAYVEEDHVA. Residue glutamine 107 participates in Ca(2+) binding. The 269-residue stretch at 110–378 folds into the Peptidase S8 domain; it reads PYGIPLIKAD…KGLINVEAAA (269 aa). Aspartate 137 serves as the catalytic Charge relay system. Aspartate 146 contributes to the Ca(2+) binding site. The active-site Charge relay system is the histidine 168. Ca(2+) contacts are provided by leucine 179, asparagine 181, threonine 183, valine 185, alanine 273, tyrosine 275, and valine 278. Residue serine 325 is the Charge relay system of the active site.

This sequence belongs to the peptidase S8 family. Ca(2+) is required as a cofactor.

The protein localises to the secreted. The enzyme catalyses Hydrolysis of proteins with broad specificity for peptide bonds, and a preference for a large uncharged residue in P1. Hydrolyzes peptide amides.. Its activity is regulated as follows. Inhibited by p-chlorophenyl and 1-naphthyl boronic acid derivatives. Functionally, subtilisin is an extracellular alkaline serine protease, it catalyzes the hydrolysis of proteins and peptide amides. Shows high specificity for aromatic and hydrophobic amino acids in the P1 substrate position. May play an important role in the degradation of feather keratin. This is Subtilisin Carlsberg from Bacillus licheniformis.